The primary structure comprises 293 residues: Putative DNA glycosylase At3g47830 (293 aa).

Positions 1-10 (MSKAQKRKRL) are enriched in basic residues. The disordered stretch occupies residues 1–34 (MSKAQKRKRLNKYDGESKTPANKSTVDGGNPYPT). Positions 108 and 151 each coordinate DNA. Catalysis depends on lysine 196, which acts as the Schiff-base intermediate with DNA. DNA contacts are provided by histidine 216 and aspartate 232.

Belongs to the DNA glycosylase family.

This is Putative DNA glycosylase At3g47830 from Arabidopsis thaliana (Mouse-ear cress).